We begin with the raw amino-acid sequence, 309 residues long: DDRGK domain-containing protein 1 (309 aa).

At 1–2 (MD) the chain is on the lumenal side. A helical transmembrane segment spans residues 3–23 (LIILVGIAVALLVVIVTLYLL). Residues 24–309 (QKKNAAPETK…ISAGGGEASS (286 aa)) lie on the Cytoplasmic side of the membrane. Disordered stretches follow at residues 32–53 (TKVAAAPQRGVPQRAQEGVPRR) and 79–175 (ALPA…KEER). A compositionally biased stretch (acidic residues) spans 87–96 (DHEDEGQVDG). The span at 107–175 (LDEKMGAKKR…DAERLAKEER (69 aa)) shows a compositional bias: basic and acidic residues. A coiled-coil region spans residues 120 to 177 (EAKEQKRLQREQELHDREQRKVKEAKEEAERKQQEDLEAEAERKRVDAERLAKEERER).

The protein belongs to the DDRGK1 family. Interacts with Atg9; the interaction is transient.

The protein localises to the endoplasmic reticulum membrane. Its function is as follows. Substrate adapter for ufmylation, the covalent attachment of the ubiquitin-like modifier UFM1 to substrate proteins. Required for ufmylation of Atg9; protects the nervous system during aging, possibly by stabilizing Atg9 and supporting its function. This chain is DDRGK domain-containing protein 1, found in Drosophila melanogaster (Fruit fly).